Reading from the N-terminus, the 243-residue chain is Type III pantothenate kinase (243 aa).

ATP is bound at residue 6 to 13; the sequence is DGGNTFIK. Residues Y87 and 94-97 each bind substrate; that span reads GKDR. D96 functions as the Proton acceptor in the catalytic mechanism. Residue D117 participates in K(+) binding. Position 120 (T120) interacts with ATP. T172 contributes to the substrate binding site.

It belongs to the type III pantothenate kinase family. Homodimer. The cofactor is NH4(+). It depends on K(+) as a cofactor.

The protein localises to the cytoplasm. It catalyses the reaction (R)-pantothenate + ATP = (R)-4'-phosphopantothenate + ADP + H(+). Its pathway is cofactor biosynthesis; coenzyme A biosynthesis; CoA from (R)-pantothenate: step 1/5. Its function is as follows. Catalyzes the phosphorylation of pantothenate (Pan), the first step in CoA biosynthesis. In Christiangramia forsetii (strain DSM 17595 / CGMCC 1.15422 / KT0803) (Gramella forsetii), this protein is Type III pantothenate kinase.